The following is a 58-amino-acid chain: UPF0337 protein OB2685 (58 aa).

Composition is skewed to basic and acidic residues over residues 1–22 (MSDG…EAKD) and 30–46 (DPQR…KGEA). Residues 1 to 58 (MSDGMKDKAKAIGKKIKGEAKDQWGSATDDPQRKAEGKRDKAKGEAQDTIADAKNNNK) are disordered.

It belongs to the UPF0337 (CsbD) family.

This chain is UPF0337 protein OB2685, found in Oceanobacillus iheyensis (strain DSM 14371 / CIP 107618 / JCM 11309 / KCTC 3954 / HTE831).